A 376-amino-acid polypeptide reads, in one-letter code: DNA methyltransferase CcrM (376 aa).

The RAMA domain occupies 273–370; the sequence is KATLSVMTGK…IDELRSVIRN (98 aa).

This sequence belongs to the N(4)/N(6)-methyltransferase family.

It catalyses the reaction a 2'-deoxyadenosine in DNA + S-adenosyl-L-methionine = an N(6)-methyl-2'-deoxyadenosine in DNA + S-adenosyl-L-homocysteine + H(+). Its function is as follows. A beta subtype methylase that recognizes the double-stranded sequence 5'-GANTC-3' and methylates A-2 on both strands. Overexpression leads to many branched and bloated cells, two to three times the size of wild-type cells, and cells that have 1-3 times the normal amount of DNA. Contributes to the accurate cell-cycle control of DNA replication and cellular morphology. Can fully replace its ortholog in C.crescentus. This is DNA methyltransferase CcrM (smeIM) from Rhizobium meliloti (strain 1021) (Ensifer meliloti).